Consider the following 192-residue polypeptide: MLPPALNIPKWLEENSHLLQPPVNNYCVYHPSSPATAGYTVMIVGGPNARTDYHINTTPEFFYQYRGSMLLKTADTSVSPPVFQDIPIHEGSIFLLPANTPHCPVRFKDTVGVVMEQPRPKDAVDTMLWFCKKCGEVVWEKRFVCTDLGTQVKEVVEEFAADQEKRTCKACGTIAETRYQEGEIVQPPRFLE.

R50 is a binding site for O2. H54, E60, and H102 together coordinate Fe cation. Residue E60 participates in substrate binding. The substrate site is built by R106 and E116. The a divalent metal cation site is built by C131, C134, C168, and C171.

It belongs to the 3-HAO family. Requires Fe(2+) as cofactor.

The protein resides in the cytoplasm. The catalysed reaction is 3-hydroxyanthranilate + O2 = (2Z,4Z)-2-amino-3-carboxymuconate 6-semialdehyde. It functions in the pathway cofactor biosynthesis; NAD(+) biosynthesis; quinolinate from L-kynurenine: step 3/3. In terms of biological role, catalyzes the oxidative ring opening of 3-hydroxyanthranilate to 2-amino-3-carboxymuconate semialdehyde, which spontaneously cyclizes to quinolinate. The protein is 3-hydroxyanthranilate 3,4-dioxygenase (bna1) of Neosartorya fischeri (strain ATCC 1020 / DSM 3700 / CBS 544.65 / FGSC A1164 / JCM 1740 / NRRL 181 / WB 181) (Aspergillus fischerianus).